A 353-amino-acid chain; its full sequence is Fasciclin-like arabinogalactan protein 21 (353 aa).

Residues 1–28 form the signal peptide; the sequence is MGCCSSDCFVYFILSIALAFMAISTTLR. N-linked (GlcNAc...) asparagine glycans are attached at residues Asn51, Asn81, Asn94, Asn200, Asn249, and Asn315. Residues 83–181 form the FAS1 1 domain; the sequence is TLFAIEDASF…HGVIGPFSPL (99 aa). Residues 254 to 352 enclose the FAS1 2 domain; sequence TILATPNLVS…GISHTLEIPH (99 aa).

The protein belongs to the fasciclin-like AGP family.

It localises to the secreted. Functionally, may be a cell surface adhesion protein. The sequence is that of Fasciclin-like arabinogalactan protein 21 (FLA21) from Arabidopsis thaliana (Mouse-ear cress).